The following is a 704-amino-acid chain: Boron transporter 1 (704 aa).

Topologically, residues 1–35 are cytoplasmic; that stretch reads MEETFVPFEGIKNDLKGRLMCYKQDWTGGFKAGFR. The helical transmembrane segment at 36–56 threads the bilayer; sequence ILAPTTYIFFASAIPVISFGE. Topologically, residues 57–75 are extracellular; that stretch reads QLERSTDGVLTAVQTLAST. Residues 76 to 96 traverse the membrane as a helical segment; the sequence is AICGMIHSIIGGQPLLILGVA. The Cytoplasmic segment spans residues 97–120; the sequence is EPTVIMYTFMFNFAKARPELGRDL. Residues 121–141 traverse the membrane as a helical segment; that stretch reads FLAWSGWVCVWTALMLFVLAI. The Extracellular segment spans residues 142 to 155; sequence CGACSIINRFTRVA. Residues 156–176 traverse the membrane as a helical segment; that stretch reads GELFGLLIAMLFMQQAIKGLV. Residues 177–195 are Cytoplasmic-facing; the sequence is DEFRIPERENQKLKEFLPS. Residues 196-216 form a helical membrane-spanning segment; sequence WRFANGMFALVLSFGLLLTGL. Topologically, residues 217–233 are extracellular; sequence RSRKARSWRYGTGWLRS. A helical membrane pass occupies residues 234–254; that stretch reads LIADYGVPLMVLVWTGVSYIP. Residues 255-289 are Cytoplasmic-facing; that stretch reads AGDVPKGIPRRLFSPNPWSPGAYGNWTVVKEMLDV. A helical transmembrane segment spans residues 290–310; it reads PIVYIIGAFIPASMIAVLYYF. At 311-337 the chain is on the extracellular side; the sequence is DHSVASQLAQQKEFNLRKPSSYHYDLL. Residues 338–358 form a helical membrane-spanning segment; sequence LLGFLTLMCGLLGVPPSNGVI. At 359–480 the chain is on the cytoplasmic side; it reads PQSPMHTKSL…STMVGGCVAA (122 aa). A helical membrane pass occupies residues 481–501; sequence MPILKMIPTSVLWGYFAFMAI. The Extracellular segment spans residues 502 to 557; that stretch reads ESLPGNQFWERILLLFTAPSRRFKVLEDYHATFVETVPFKTIAMFTLFQTTYLLIC. Residues 558–578 traverse the membrane as a helical segment; that stretch reads FGLTWIPIAGVMFPLMIMFLI. The Cytoplasmic segment spans residues 579-704; that stretch reads PVRQYLLPRF…RSPLNQSSSN (126 aa). Positions 641-704 are disordered; that stretch reads EFRHTSSPKV…RSPLNQSSSN (64 aa). The segment covering 647–664 has biased composition (low complexity); it reads SPKVTSSSSTPVNNRSLS.

This sequence belongs to the anion exchanger (TC 2.A.31.3) family. In terms of tissue distribution, expressed in proximal side of various root cells, notably in the columella, lateral root cap, epidermis and endodermis in tip and elongation zones of the root. Also detected in the epidermis, cortex, endodermis, and stele cells of the root hair zone. Observed in cotyledons and hypocotyls.

It localises to the cell membrane. It is found in the endosome membrane. Its subcellular location is the vacuole membrane. Efflux-type boron (B) transporter for xylem loading, responsive of boron translocation from roots to shoots under boron limitation. Boron is essential for maintaining the integrity of plants cell walls. The polypeptide is Boron transporter 1 (Arabidopsis thaliana (Mouse-ear cress)).